The sequence spans 241 residues: DNA protection during starvation protein 2 (241 aa).

Positions Gly-25–Thr-65 are disordered. Residues Val-33–Ser-57 are compositionally biased toward polar residues. 3 residues coordinate Fe cation: His-100, Asp-127, and Glu-131. Residues Thr-220–Asp-229 are compositionally biased toward polar residues. The segment at Thr-220–Arg-241 is disordered.

This sequence belongs to the Dps family. As to quaternary structure, homododecamer. The 12 subunits form a hollow sphere into which the mineral iron core of up to 500 Fe(3+) can be deposited.

Its subcellular location is the cytoplasm. It carries out the reaction 2 Fe(2+) + H2O2 + 2 H(+) = 2 Fe(3+) + 2 H2O. Functionally, protects DNA from oxidative damage by sequestering intracellular Fe(2+) ion and storing it in the form of Fe(3+) oxyhydroxide mineral. One hydrogen peroxide oxidizes two Fe(2+) ions, which prevents hydroxyl radical production by the Fenton reaction. This is DNA protection during starvation protein 2 (dps2) from Deinococcus radiodurans (strain ATCC 13939 / DSM 20539 / JCM 16871 / CCUG 27074 / LMG 4051 / NBRC 15346 / NCIMB 9279 / VKM B-1422 / R1).